The chain runs to 932 residues: Adhesion G protein-coupled receptor E2 (932 aa).

An N-terminal signal peptide occupies residues 1–15; that stretch reads MWGFWLLLFWGFSGT. Topologically, residues 16 to 652 are extracellular; the sequence is HRWGMTTLAI…TMEFSLYIIS (637 aa). EGF-like domains lie at 32–69 and 81–119; these read GVNECQDTTTCPAYATCTDTTESYYCTCKQGFLPSNGQ and DVNECLRSDSPCGSNSVCTNIPGRARCSCLSGFSSSAGG. 11 cysteine pairs are disulfide-bonded: Cys-36–Cys-48, Cys-42–Cys-57, Cys-85–Cys-98, Cys-92–Cys-107, Cys-137–Cys-149, Cys-143–Cys-158, Cys-160–Cys-171, Cys-177–Cys-189, Cys-183–Cys-198, Cys-226–Cys-239, and Cys-233–Cys-248. The 40-residue stretch at 133 to 172 folds into the EGF-like 3; calcium-binding domain; sequence DVDECLTIGICPKNSNCSNSVGSYSCTCQSGFVSNGSTCE. N-linked (GlcNAc...) asparagine glycosylation is found at Asn-148 and Asn-167. Residues 173 to 210 enclose the EGF-like 4; calcium-binding domain; that stretch reads DEDECVTRNACPEHATCHNTLGSYYCTCNEGLEFSGGG. Positions 222-260 constitute an EGF-like 5; calcium-binding domain; sequence DVDECSRNSTLCGPSFICINTLGSYSCSCPAGFSLSTFQ. An N-linked (GlcNAc...) asparagine glycan is attached at Asn-229. Residues Asn-269, Asn-283, Asn-309, Asn-333, Asn-344, Asn-363, Asn-405, Asn-417, Asn-474, and Asn-499 are each glycosylated (N-linked (GlcNAc...) asparagine). Residues 272-307 form the EGF-like 6; calcium-binding domain; sequence DIDECDDICPSNSSCTNTLGSYFCTCHPGFASSNGQ. 2 disulfides stabilise this stretch: Cys-276/Cys-286 and Cys-280/Cys-295. The EGF-like 7; calcium-binding domain occupies 319–354; that stretch reads DIDECTQDPFRCGRNSSCTNVPGSYNCSCLPDFRMD. 2 disulfides stabilise this stretch: Cys-323-Cys-336 and Cys-330-Cys-345. In terms of domain architecture, GAIN-B spans 482–643; the sequence is EYLEIESKVI…AIIMASGELT (162 aa). Positions 507 to 509 match the Cell attachment site motif; that stretch reads RGD. 2 disulfide bridges follow: Cys-596–Cys-625 and Cys-613–Cys-627. The tract at residues 596 to 643 is GPS; sequence CVSWNTDVEDGRWTPSGCETVEASETHTVCSCNRMTNLAIIMASGELT. Residues 653–673 form a helical membrane-spanning segment; it reads YVGTVISLVCLALAIATFLLF. At 674–681 the chain is on the cytoplasmic side; the sequence is RAVQNHNT. Residues 682–702 traverse the membrane as a helical segment; the sequence is YLHLHLCVCLFLAKILFLTGI. Residues 703 to 719 are Extracellular-facing; sequence DKTDNQTACAIIAGFLH. Asn-707 is a glycosylation site (N-linked (GlcNAc...) asparagine). Residues 720–740 form a helical membrane-spanning segment; it reads YLFLACFFWMLVEAVMLFLMV. At 741–756 the chain is on the cytoplasmic side; the sequence is RNLKVVNYFSSRNIKM. The helical transmembrane segment at 757–777 threads the bilayer; sequence LHLCAFGYGLPVVVVIISATV. Residues 778 to 795 lie on the Extracellular side of the membrane; the sequence is HPWGYGMHNRCWLNTETG. Residues 796-816 traverse the membrane as a helical segment; that stretch reads FIWSFLGPVCMIITINSALLA. Residues 817–849 lie on the Cytoplasmic side of the membrane; it reads WTLWVLRQKLCSVNSEVSKLKDTRLLTFKAIAQ. The chain crosses the membrane as a helical span at residues 850 to 870; it reads IFILGCSWVLGIFQIGPLASI. Over 871–872 the chain is Extracellular; it reads MA. The chain crosses the membrane as a helical span at residues 873–893; the sequence is YLFTTINSLQGAFIFLIHCLL. Residues 894 to 932 are Cytoplasmic-facing; it reads NRQVRDEYRKLLTRKTDLSSHSQTSGILLSSMPSTSKTG.

It belongs to the G-protein coupled receptor 2 family. Adhesion G-protein coupled receptor (ADGR) subfamily.

Its subcellular location is the cell membrane. Its function is as follows. Orphan receptor involved in cell adhesion and probably in cell-cell interactions involved specifically cells of the immune system. May play a role in regulatory T-cells (Treg) development. In Rattus norvegicus (Rat), this protein is Adhesion G protein-coupled receptor E2 (Adgre1).